We begin with the raw amino-acid sequence, 319 residues long: Methionyl-tRNA formyltransferase (319 aa).

113–116 (SLLP) contributes to the (6S)-5,6,7,8-tetrahydrofolate binding site.

This sequence belongs to the Fmt family.

It carries out the reaction L-methionyl-tRNA(fMet) + (6R)-10-formyltetrahydrofolate = N-formyl-L-methionyl-tRNA(fMet) + (6S)-5,6,7,8-tetrahydrofolate + H(+). In terms of biological role, attaches a formyl group to the free amino group of methionyl-tRNA(fMet). The formyl group appears to play a dual role in the initiator identity of N-formylmethionyl-tRNA by promoting its recognition by IF2 and preventing the misappropriation of this tRNA by the elongation apparatus. This Pseudomonas fluorescens (strain ATCC BAA-477 / NRRL B-23932 / Pf-5) protein is Methionyl-tRNA formyltransferase.